The sequence spans 349 residues: Phosphate acyltransferase (349 aa).

It belongs to the PlsX family. As to quaternary structure, homodimer. Probably interacts with PlsY.

Its subcellular location is the cytoplasm. It carries out the reaction a fatty acyl-[ACP] + phosphate = an acyl phosphate + holo-[ACP]. The protein operates within lipid metabolism; phospholipid metabolism. Functionally, catalyzes the reversible formation of acyl-phosphate (acyl-PO(4)) from acyl-[acyl-carrier-protein] (acyl-ACP). This enzyme utilizes acyl-ACP as fatty acyl donor, but not acyl-CoA. This is Phosphate acyltransferase from Rhodospirillum rubrum (strain ATCC 11170 / ATH 1.1.1 / DSM 467 / LMG 4362 / NCIMB 8255 / S1).